A 130-amino-acid chain; its full sequence is Small ribosomal subunit protein uS9 (130 aa).

Belongs to the universal ribosomal protein uS9 family.

The sequence is that of Small ribosomal subunit protein uS9 from Burkholderia ambifaria (strain MC40-6).